The following is a 417-amino-acid chain: MDKLLIEGGKVLSGEVAMSGAKNAALPILCASLLTSDPVHFTNVPHLNDISTMLRLLGDMGVGVTMDGIDGIVLNGGGLNNPVASYEMVKTMRASILVLGPLVARCGEARVSLPGGCAIGARPVDQHIKGLQAMGAEVKVEQGYVHAKATRLKGARICTDMVTVTGTENLMMAACLAEGETVIENAAREPEVVDLANCLVSMGARISGAGTDVIRIQGVDKLHGATHAIMPDRIETGTYLCAAAATGGDIRLLKTSAAYLDTVVDKLMDAGCEITVERDAIRLVAPKRLKAVSLRTAPYPAFPTDMQAQFMAINCIADGVATIRETIFENRFMHVNELMRLGANIQIEGNNAIVRGVDRLEGATVMATDLRASASLVIAGLVAQGETVIDRIYHLDRGYERIEEKLAKLGAAVRRVH.

A phosphoenolpyruvate-binding site is contributed by 22-23; that stretch reads KN. Residue Arg-93 participates in UDP-N-acetyl-alpha-D-glucosamine binding. Catalysis depends on Cys-117, which acts as the Proton donor. Cys-117 is subject to 2-(S-cysteinyl)pyruvic acid O-phosphothioketal. UDP-N-acetyl-alpha-D-glucosamine-binding positions include 122-126, Asp-305, and Ile-327; that span reads RPVDQ.

This sequence belongs to the EPSP synthase family. MurA subfamily.

It is found in the cytoplasm. It catalyses the reaction phosphoenolpyruvate + UDP-N-acetyl-alpha-D-glucosamine = UDP-N-acetyl-3-O-(1-carboxyvinyl)-alpha-D-glucosamine + phosphate. It functions in the pathway cell wall biogenesis; peptidoglycan biosynthesis. Functionally, cell wall formation. Adds enolpyruvyl to UDP-N-acetylglucosamine. In Dechloromonas aromatica (strain RCB), this protein is UDP-N-acetylglucosamine 1-carboxyvinyltransferase.